The primary structure comprises 427 residues: ATP-sensitive inward rectifier potassium channel 12 (427 aa).

At 1–77 (MTASGRTNPY…LADMFTTCVD (77 aa)) the chain is on the cytoplasmic side. Cysteine 75 is modified (S-nitrosocysteine). A helical transmembrane segment spans residues 78-104 (IRWRYMLLIFSLAFLASWLLFGVIFWV). Positions 79 and 81 each coordinate a 1,2-diacyl-sn-glycero-3-phospho-(1D-myo-inositol-4,5-bisphosphate). The Extracellular portion of the chain corresponds to 105–129 (IAVAHGDLEPAEAHGRTPCVLQVHG). Cysteine 123 and cysteine 155 are oxidised to a cystine. Positions 130–146 (FMAAFLFSIETQTTIGY) form an intramembrane region, helical; Pore-forming. K(+)-binding residues include threonine 143, isoleucine 144, glycine 145, and tyrosine 146. Residues 143 to 148 (TIGYGL) carry the Selectivity filter motif. Topologically, residues 147 to 155 (GLRCVTEEC) are extracellular. The helical transmembrane segment at 156-183 (PVAVFMVVAQSIVGCIIDSFMIGAIMAK) threads the bilayer. 2 residues coordinate a 1,2-diacyl-sn-glycero-3-phospho-(1D-myo-inositol-4,5-bisphosphate): lysine 183 and lysine 188. Residues 184-427 (MARPKKRAQT…QRPYRRESEI (244 aa)) lie on the Cytoplasmic side of the membrane. Over residues 387 to 396 (DEEDEVDGEQ) the composition is skewed to acidic residues. Residues 387–427 (DEEDEVDGEQDSLGPQARRDFDRPQAGTALEQRPYRRESEI) form a disordered region. The PDZ-binding signature appears at 425–427 (SEI).

It belongs to the inward rectifier-type potassium channel (TC 1.A.2.1) family. KCNJ12 subfamily. In terms of assembly, homotetramer. Forms heteromer with KCNJ4. Association, via its PDZ-recognition domain, with LIN7A, LIN7B, LIN7C, DLG1, CASK and APBA1 plays a key role in its localization and trafficking.

It is found in the membrane. The enzyme catalyses K(+)(in) = K(+)(out). Its activity is regulated as follows. Activated by phosphatidylinositol 4,5-biphosphate (PtdIns(4,5)P2). PtdIns(4,5)P2 binding to the cytoplasmic side of the channel triggers a conformation change leading to channel opening. Its function is as follows. Inward rectifying potassium channel that probably participates in controlling the resting membrane potential in electrically excitable cells. Probably participates in establishing action potential waveform and excitability of neuronal and muscle tissues. Inward rectifier potassium channels are characterized by a greater tendency to allow potassium to flow into the cell rather than out of it. Their voltage dependence is regulated by the concentration of extracellular potassium; as external potassium is raised, the voltage range of the channel opening shifts to more positive voltages. The inward rectification is mainly due to the blockage of outward current by internal magnesium. The polypeptide is ATP-sensitive inward rectifier potassium channel 12 (KCNJ12) (Bos taurus (Bovine)).